The primary structure comprises 75 residues: UPF0352 protein VF_1649 (75 aa).

The protein belongs to the UPF0352 family.

The protein is UPF0352 protein VF_1649 of Aliivibrio fischeri (strain ATCC 700601 / ES114) (Vibrio fischeri).